Here is a 432-residue protein sequence, read N- to C-terminus: MGNNVVVLGTQWGDEGKGKIVDLLTEDAKYVVRYQGGHNAGHTLVIDGQKTVLHLIPSGILRNNVKCIIGNGVVLSPEALIKEMSGLEERGVPVRERLFISEACPLILPYHVALDQAREAARGKKAIGTTGRGIGPAYEDKVARRGLRVGDLFDMASFAEKLQEVMAFHNFQLEHFYKVEPVSYEAVLEQAKGYAELLTSMVIDVTNELDAARKRGDKIMFEGAQGTLLDIDHGTYPYVTSSNTTAGGVAAGSGFGPRHLGYILGIAKAYCTRVGAGPFPTELFDEVGDHLGTKGHEFGATTGRKRRCGWFDAVAMRRAIQINSVTGFCLTKLDVLDGLKEIKICTGYQMPDGSIAEVSPMAADAFENVTPIFETMPGWSETTFGAKTLAELPQTALDYIKRIEELTGVPVDIISTGPDRNETIIKVHPFSA.

Residues 13-19 (GDEGKGK) and 41-43 (GHT) contribute to the GTP site. The active-site Proton acceptor is the Asp-14. 2 residues coordinate Mg(2+): Asp-14 and Gly-41. IMP-binding positions include 14–17 (DEGK), 39–42 (NAGH), Thr-130, Arg-144, Gln-225, Thr-240, and Arg-304. The Proton donor role is filled by His-42. 300 to 306 (ATTGRKR) contacts substrate. GTP-binding positions include Arg-306, 332 to 334 (KLD), and 415 to 417 (STG).

The protein belongs to the adenylosuccinate synthetase family. In terms of assembly, homodimer. Requires Mg(2+) as cofactor.

It is found in the cytoplasm. It carries out the reaction IMP + L-aspartate + GTP = N(6)-(1,2-dicarboxyethyl)-AMP + GDP + phosphate + 2 H(+). The protein operates within purine metabolism; AMP biosynthesis via de novo pathway; AMP from IMP: step 1/2. Functionally, plays an important role in the de novo pathway of purine nucleotide biosynthesis. Catalyzes the first committed step in the biosynthesis of AMP from IMP. This is Adenylosuccinate synthetase from Vibrio cholerae serotype O1 (strain ATCC 39541 / Classical Ogawa 395 / O395).